The sequence spans 234 residues: SPX domain-containing protein 6 (234 aa).

Residues 1–137 (MKFGKLLKRQ…GGALAAPVAE (137 aa)) form the SPX domain. The tract at residues 202–234 (GSSTHGRHSLPPLTLPDSDWLRSFQPPSPIPIQ) is disordered.

Predominantly expressed in roots and leaves.

Its function is as follows. May be involved in maintaining cellular Pi homeostasis when plants are exposed to an external change in Pi. The polypeptide is SPX domain-containing protein 6 (Oryza sativa subsp. japonica (Rice)).